The following is a 646-amino-acid chain: Elongation factor 4 (646 aa).

One can recognise a tr-type G domain in the interval alanine 42–glutamine 227. GTP-binding positions include aspartate 54–threonine 59 and asparagine 174–aspartate 177.

Belongs to the TRAFAC class translation factor GTPase superfamily. Classic translation factor GTPase family. LepA subfamily.

Its subcellular location is the cell membrane. It carries out the reaction GTP + H2O = GDP + phosphate + H(+). Its function is as follows. Required for accurate and efficient protein synthesis under certain stress conditions. May act as a fidelity factor of the translation reaction, by catalyzing a one-codon backward translocation of tRNAs on improperly translocated ribosomes. Back-translocation proceeds from a post-translocation (POST) complex to a pre-translocation (PRE) complex, thus giving elongation factor G a second chance to translocate the tRNAs correctly. Binds to ribosomes in a GTP-dependent manner. This Mycobacterium leprae (strain Br4923) protein is Elongation factor 4.